Reading from the N-terminus, the 188-residue chain is Chitin synthase 1 (188 aa).

This sequence belongs to the chitin synthase family. Class I subfamily.

The protein resides in the cell membrane. It carries out the reaction [(1-&gt;4)-N-acetyl-beta-D-glucosaminyl](n) + UDP-N-acetyl-alpha-D-glucosamine = [(1-&gt;4)-N-acetyl-beta-D-glucosaminyl](n+1) + UDP + H(+). Its function is as follows. Polymerizes chitin, a structural polymer of the cell wall and septum, by transferring the sugar moiety of UDP-GlcNAc to the non-reducing end of the growing chitin polymer. The chain is Chitin synthase 1 (CHS1) from Ajellomyces dermatitidis (Blastomyces dermatitidis).